The sequence spans 185 residues: Ribosome-recycling factor (185 aa).

The protein belongs to the RRF family.

It is found in the cytoplasm. Its function is as follows. Responsible for the release of ribosomes from messenger RNA at the termination of protein biosynthesis. May increase the efficiency of translation by recycling ribosomes from one round of translation to another. The sequence is that of Ribosome-recycling factor from Shewanella piezotolerans (strain WP3 / JCM 13877).